The primary structure comprises 338 residues: Fructose-1,6-bisphosphatase class 1 (338 aa).

4 residues coordinate Mg(2+): E92, D114, L116, and D117. Substrate contacts are provided by residues 117–120 (DGSS), N210, Y243, and K276. E282 contributes to the Mg(2+) binding site.

It belongs to the FBPase class 1 family. Homotetramer. Requires Mg(2+) as cofactor.

The protein resides in the cytoplasm. The catalysed reaction is beta-D-fructose 1,6-bisphosphate + H2O = beta-D-fructose 6-phosphate + phosphate. It participates in carbohydrate biosynthesis; gluconeogenesis. The polypeptide is Fructose-1,6-bisphosphatase class 1 (Maridesulfovibrio salexigens (strain ATCC 14822 / DSM 2638 / NCIMB 8403 / VKM B-1763) (Desulfovibrio salexigens)).